A 202-amino-acid polypeptide reads, in one-letter code: Small ribosomal subunit protein uS4c (202 aa).

One can recognise an S4 RNA-binding domain in the interval 90 to 154 (MRLDNILFRL…SQSIITKNLN (65 aa)).

The protein belongs to the universal ribosomal protein uS4 family. Part of the 30S ribosomal subunit. Contacts protein S5. The interaction surface between S4 and S5 is involved in control of translational fidelity.

The protein resides in the plastid. Its subcellular location is the chloroplast. Functionally, one of the primary rRNA binding proteins, it binds directly to 16S rRNA where it nucleates assembly of the body of the 30S subunit. With S5 and S12 plays an important role in translational accuracy. This is Small ribosomal subunit protein uS4c (rps4) from Monoclea forsteri (Liverwort).